Reading from the N-terminus, the 465-residue chain is GTPase Der (465 aa).

EngA-type G domains are found at residues 3–166 (FLVA…LNEY) and 184–358 (IHFS…ACAN). Residues 9-16 (GRANVGKS), 56-60 (DTGGI), 118-121 (NKVD), 190-197 (GRPNVGKS), 237-241 (DTAGV), and 302-305 (NKWD) contribute to the GTP site. In terms of domain architecture, KH-like spans 359 to 443 (KKITTADATR…PIVFEFKQSE (85 aa)). Positions 446 to 465 (FADRKNKRSKDEGSKSKKVK) are disordered.

It belongs to the TRAFAC class TrmE-Era-EngA-EngB-Septin-like GTPase superfamily. EngA (Der) GTPase family. As to quaternary structure, associates with the 50S ribosomal subunit.

Its function is as follows. GTPase that plays an essential role in the late steps of ribosome biogenesis. The chain is GTPase Der from Francisella tularensis subsp. tularensis (strain WY96-3418).